Consider the following 407-residue polypeptide: Cytochrome P450-pinF2, plant-inducible (407 aa).

Residue C356 participates in heme binding.

This sequence belongs to the cytochrome P450 family. Heme serves as cofactor.

Its function is as follows. Not essential for virulence, but may be involved in the detoxification of plant protective agents at the site of wounding. In Rhizobium radiobacter (Agrobacterium tumefaciens), this protein is Cytochrome P450-pinF2, plant-inducible (cyp104).